Consider the following 465-residue polypeptide: Cysteine--tRNA ligase (465 aa).

A Zn(2+)-binding site is contributed by Cys-28. Residues 30–40 (MTVYDYCHLGH) carry the 'HIGH' region motif. Residues Cys-209, His-234, and Glu-238 each contribute to the Zn(2+) site. Positions 266–270 (KMSKS) match the 'KMSKS' region motif. An ATP-binding site is contributed by Lys-269.

This sequence belongs to the class-I aminoacyl-tRNA synthetase family. Monomer. It depends on Zn(2+) as a cofactor.

The protein localises to the cytoplasm. The enzyme catalyses tRNA(Cys) + L-cysteine + ATP = L-cysteinyl-tRNA(Cys) + AMP + diphosphate. In Methylococcus capsulatus (strain ATCC 33009 / NCIMB 11132 / Bath), this protein is Cysteine--tRNA ligase.